The sequence spans 328 residues: Carbonic anhydrase, chloroplastic (328 aa).

Over residues Met1–Ser15 the composition is skewed to low complexity. Residues Met1–Leu26 are disordered. The transit peptide at Met1–Met70 directs the protein to the chloroplast.

It belongs to the beta-class carbonic anhydrase family. As to quaternary structure, homohexamer.

The protein resides in the plastid. It localises to the chloroplast stroma. The catalysed reaction is hydrogencarbonate + H(+) = CO2 + H2O. In terms of biological role, reversible hydration of carbon dioxide. The chain is Carbonic anhydrase, chloroplastic from Pisum sativum (Garden pea).